Consider the following 740-residue polypeptide: Zinc finger CCCH domain-containing protein 14 (740 aa).

4 disordered regions span residues 82 to 240 (SNKQ…NIKG), 254 to 314 (VSAG…DDAV), 390 to 426 (ITPS…DDEE), and 444 to 469 (SFRD…HHST). 2 stretches are compositionally biased toward basic and acidic residues: residues 87–158 (ETSK…EIQR) and 176–185 (EHVRARGEKH). Residues 186–200 (DRHHHKDHRRGRSHE) show a composition bias toward basic residues. A compositionally biased stretch (polar residues) spans 204–214 (ITSTIVRQASA). The segment covering 393 to 409 (SRDSTPTDDSPTMQKWN) has biased composition (polar residues). Positions 414 to 426 (IGDDSEESEDDEE) are enriched in acidic residues. 2 C3H1-type zinc fingers span residues 499 to 522 (HVKE…MHPT) and 523 to 543 (TNCK…IHPP). The interval 623–661 (IKKKPAPGAESEKKEEKSDENESKAEEPKAEVAPVQPKP) is disordered. The span at 632–652 (ESEKKEEKSDENESKAEEPKA) shows a compositional bias: basic and acidic residues. 3 consecutive C3H1-type zinc fingers follow at residues 668 to 691 (LHSM…KHPK), 674 to 691 (CRYA…KHPK), and 693 to 709 (CRFG…FYHK).

This sequence belongs to the ZC3H14 family.

The protein localises to the nucleus. The protein resides in the cytoplasm. RNA-binding protein involved in the biogenesis of circular RNAs (circRNAs), which are produced by back-splicing circularization of pre-mRNAs. The sequence is that of Zinc finger CCCH domain-containing protein 14 (sut-2) from Caenorhabditis elegans.